Consider the following 511-residue polypeptide: uncharacterized protein (511 aa).

The tract at residues 59–79 (VPVAANDDQPDGSRQSVRGRQ) is disordered.

The protein belongs to the transposase 25 family.

This is an uncharacterized protein from Sinorhizobium fredii (strain NBRC 101917 / NGR234).